The chain runs to 541 residues: Nuclear receptor subfamily 5 group A member 2 (541 aa).

Over residues 1–10 (MSSNSDTGDL) the composition is skewed to polar residues. Positions 1 to 35 (MSSNSDTGDLQESLKHGLTPIGAGLPDRHGSPIPA) are disordered. The segment at residues 83 to 154 (EELCPVCGDK…KCLSVGMKLE (72 aa)) is a DNA-binding region (nuclear receptor). 8 residues coordinate Zn(2+): Cys86, Cys89, Cys103, Cys106, Cys122, Cys128, Cys138, and Cys141. NR C4-type zinc fingers lie at residues 86-106 (CPVC…CESC) and 122-146 (CIEN…FQKC). The tract at residues 152–167 (KLEAVRADRMRGGRNK) is C-terminal extension (CTE). The short motif at 168–187 (FGPMYKRDRALKQQKKALIR) is the FTZ-F1 box element. A Glycyl lysine isopeptide (Lys-Gly) (interchain with G-Cter in SUMO1) cross-link involves residue Lys270. Residues 300 to 539 (SIPHLILELL…NLLIEMLHAK (240 aa)) form the NR LBD domain. A phospholipid derivative-binding positions include 421-424 (GATL), Tyr516, and Lys520. The AF-2 stretch occupies residues 528–539 (YNNLLIEMLHAK).

It belongs to the nuclear hormone receptor family. NR5 subfamily. As to quaternary structure, monomer; Binds DNA as a monomer. Interacts with nuclear receptor corepressors NR0B1 and NR0B2; repressing NR5A2 nuclear receptor activity. Interacts with nuclear receptor coactivators CTNNB1, PPARGC1A and NCOA2; interaction takes place following ligand-binding and promotes target gene activation. Interacts (when sumoylated) with GPS2; interaction with GPS2 onto hepatic acute phase protein promoters prevents N-Cor corepressor complex dissociation. Interacts with HNF1A. Interacts with GRIP1. Sumoylated by SUMO1 at Lys-270 during the hepatic acute phase response, leading to promote interaction with GPS2 and prevent N-Cor corepressor complex dissociation. In terms of tissue distribution, abundantly expressed in pancreas, less in liver, very low levels in heart and lung. Expressed in the Hep-G2 cell line. Isoform 1 and isoform 2 seem to be present in fetal and adult liver and Hep-G2 cells.

Its subcellular location is the nucleus. The protein resides in the chromosome. With respect to regulation, activated by synthetic agonists RR-RJW100, SR-RJW100, endo sulfamide compound 6N and GSK8470. Orphan nuclear receptor that binds DNA as a monomer to the 5'-TCAAGGCCA-3' sequence and controls expression of target genes: regulates key biological processes, such as early embryonic development, cholesterol and bile acid synthesis pathways, as well as liver and pancreas morphogenesis. Ligand-binding causes conformational change which causes recruitment of coactivators, promoting target gene activation. The specific ligand is unknown, but specific phospholipids, such as phosphatidylethanolamine, phosphatidylserine, dilauroyl phosphatidylcholine and diundecanoyl phosphatidylcholine can act as ligand in vitro. Acts as a pioneer transcription factor, which unwraps target DNA from histones and elicits local opening of closed chromatin. Plays a central role during preimplantation stages of embryonic development. Plays a minor role in zygotic genome activation (ZGA) by regulating a small set of two-cell stage genes. Plays a major role in morula development (2-16 cells embryos) by acting as a master regulator at the 8-cell stage, controlling expression of lineage-specifying transcription factors and genes involved in mitosis, telomere maintenance and DNA repair. Zygotic NR5A2 binds to both closed and open chromatin with other transcription factors, often at SINE B1/Alu repeats DNA elements, promoting chromatin accessibility at nearby regulatory regions. Also involved in the epiblast stage of development and embryonic stem cell pluripotency, by promoting expression of POU5F1/OCT4. Regulates other processes later in development, such as formation of connective tissue in lower jaw and middle ear, neural stem cell differentiation, ovarian follicle development and Sertoli cell differentiation. Involved in exocrine pancreas development and acinar cell differentiation. Acts as an essential transcriptional regulator of lipid metabolism. Key regulator of cholesterol 7-alpha-hydroxylase gene (CYP7A) expression in liver. Also acts as a negative regulator of inflammation in different organs, such as, liver and pancreas. Protects against intestinal inflammation via its ability to regulate glucocorticoid production. Plays an anti-inflammatory role during the hepatic acute phase response by acting as a corepressor: inhibits the hepatic acute phase response by preventing dissociation of the N-Cor corepressor complex. Acts as a regulator of immunity by promoting lymphocyte T-cell development, proliferation and effector functions. Also involved in resolution of endoplasmic reticulum stress in the liver. In terms of biological role, in constrast to isoform 1 and isoform 2, does not induce cholesterol 7-alpha-hydroxylase gene (CYP7A) promoter activity. Functionally, (Microbial infection) Plays a crucial role for hepatitis B virus gene transcription and DNA replication. Mechanistically, synergistically cooperates with HNF1A to up-regulate the activity of one of the critical cis-elements in the hepatitis B virus genome enhancer II (ENII). This chain is Nuclear receptor subfamily 5 group A member 2, found in Homo sapiens (Human).